We begin with the raw amino-acid sequence, 278 residues long: Dermonecrotic toxin LhSicTox-alphaIV1iii (278 aa).

Residue His5 is part of the active site. The Mg(2+) site is built by Glu25 and Asp27. His41 (nucleophile) is an active-site residue. 2 disulfide bridges follow: Cys45/Cys51 and Cys47/Cys192. Asp85 provides a ligand contact to Mg(2+).

This sequence belongs to the arthropod phospholipase D family. Class II subfamily. Mg(2+) serves as cofactor. As to expression, expressed by the venom gland.

Its subcellular location is the secreted. The catalysed reaction is an N-(acyl)-sphingosylphosphocholine = an N-(acyl)-sphingosyl-1,3-cyclic phosphate + choline. The enzyme catalyses an N-(acyl)-sphingosylphosphoethanolamine = an N-(acyl)-sphingosyl-1,3-cyclic phosphate + ethanolamine. It carries out the reaction a 1-acyl-sn-glycero-3-phosphocholine = a 1-acyl-sn-glycero-2,3-cyclic phosphate + choline. It catalyses the reaction a 1-acyl-sn-glycero-3-phosphoethanolamine = a 1-acyl-sn-glycero-2,3-cyclic phosphate + ethanolamine. In terms of biological role, dermonecrotic toxins cleave the phosphodiester linkage between the phosphate and headgroup of certain phospholipids (sphingolipid and lysolipid substrates), forming an alcohol (often choline) and a cyclic phosphate. This toxin acts on sphingomyelin (SM). It may also act on ceramide phosphoethanolamine (CPE), lysophosphatidylcholine (LPC) and lysophosphatidylethanolamine (LPE), but not on lysophosphatidylserine (LPS), and lysophosphatidylglycerol (LPG). It acts by transphosphatidylation, releasing exclusively cyclic phosphate products as second products. Induces dermonecrosis, hemolysis, increased vascular permeability, edema, inflammatory response, and platelet aggregation. This chain is Dermonecrotic toxin LhSicTox-alphaIV1iii, found in Loxosceles hirsuta (Recluse spider).